Consider the following 2769-residue polypeptide: Teneurin-4 (2769 aa).

Positions 1-22 are enriched in basic and acidic residues; the sequence is MDVKERKPYRSLTRRRDAERRY. The tract at residues 1–45 is disordered; it reads MDVKERKPYRSLTRRRDAERRYTSSSADSEEGKAPQKSYSSSETL. Residues 1–341 enclose the Teneurin N-terminal domain; the sequence is MDVKERKPYR…KPSKYCNWKC (341 aa). At 1-345 the chain is on the cytoplasmic side; it reads MDVKERKPYR…YCNWKCAALS (345 aa). At S124 the chain carries Phosphoserine. Positions 130-233 are disordered; it reads RLWGRSTRSG…PPAGGAQEPA (104 aa). Residues 134–155 show a composition bias toward low complexity; that stretch reads RSTRSGRSSCLSSRANSNLTLT. A compositionally biased stretch (basic and acidic residues) spans 156–166; the sequence is DTEHENTETDH. T178 is modified (phosphothreonine). A compositionally biased stretch (polar residues) spans 187 to 211; sequence HTPNQHHAASINSLNRGNFTPRSNP. The chain crosses the membrane as a helical span at residues 346 to 366; it reads AIVISATLVILLAYFVAMHLF. The Extracellular portion of the chain corresponds to 367 to 2769; sequence GLNWHLQPME…FMRQSEMGRR (2403 aa). The disordered stretch occupies residues 400–426; sequence PSGGTGLETPDRKGKGTTEGKPSSFFP. A compositionally biased stretch (basic and acidic residues) spans 408–417; it reads TPDRKGKGTT. N467 carries N-linked (GlcNAc...) asparagine glycosylation. A disordered region spans residues 507 to 526; that stretch reads ARSLEGTPRQSRGTVPPSSH. The span at 514–526 shows a compositional bias: polar residues; that stretch reads PRQSRGTVPPSSH. EGF-like domains follow at residues 562–593, 594–624, 626–658, 659–690, 692–725, 726–757, 758–787, and 788–831; these read SVDN…PDCG, RASC…AECD, PTNQ…ESCE, EVDC…TNCE, PRAT…HDCS, IEIC…ACDQ, RACH…EHCT, and IAHY…AGCD. Disulfide bonds link C566/C576, C570/C581, C583/C592, C601/C612, C614/C623, C630/C641, C635/C646, C648/C657, C662/C673, C667/C678, C680/C689, C700/C713, C715/C724, C729/C739, C733/C744, C746/C755, C760/C770, C764/C775, C777/C786, C800/C810, C804/C819, and C821/C830. Residues N940 and N1259 are each glycosylated (N-linked (GlcNAc...) asparagine). NHL repeat units lie at residues 1216–1259, 1264–1308, 1334–1378, 1393–1444, and 1523–1566; these read SCPS…PSGN, LELR…IKST, TRCG…NGII, LSCD…VAGR, and CFSG…IRKN. Residues 1576–1595 form a YD 1 repeat; the sequence is YELSSPIDQELYLFDTTGKH. N1609 is a glycosylation site (N-linked (GlcNAc...) asparagine). 3 YD repeats span residues 1612–1632, 1675–1694, and 1695–1717; these read YTGD…VNVR, YHGN…WTTF, and YEYD…SSFR. N1705, N1741, N1799, and N1884 each carry an N-linked (GlcNAc...) asparagine glycan. YD repeat units lie at residues 1887–1906, 1928–1946, 1947–1967, 1974–1991, 1992–2013, 2014–2031, 2034–2054, 2057–2077, 2085–2104, 2110–2127, 2128–2154, 2156–2169, 2170–2193, 2196–2216, 2217–2237, 2239–2259, 2271–2291, and 2293–2313; these read YSPG…ERME, YLEK…YIFE, FDKN…QTLE, YYRN…VIQD, FTED…VIYK, YGKL…TKVS, YDET…FTCT, YRQI…EGMV, YDNS…TPLP, YDDV…GVIY, YDIN…MKEV, YEIF…MTVQ, YDNM…TRYS, YDAD…WRYS, YDLN…LTPL, YDIR…DEDG, YNSA…SVRY, and YDGL…LQFF. N-linked (GlcNAc...) asparagine glycosylation occurs at N1985. A glycan (N-linked (GlcNAc...) asparagine) is linked at N2188. N2328 is a glycosylation site (N-linked (GlcNAc...) asparagine). The YD 23 repeat unit spans residues 2339 to 2380; the sequence is YDLQGHLFAMELSSGDEFYIACDNIGTPLAVFSGTGLMIKQI. N-linked (GlcNAc...) asparagine glycosylation is present at N2646.

Belongs to the tenascin family. Teneurin subfamily. As to quaternary structure, homodimer; disulfide-linked. May also form heterodimer with either TENM1 or TENM2 or TENM3.

It localises to the cell membrane. The protein resides in the cell projection. The protein localises to the nucleus. Its subcellular location is the cytoplasm. Involved in neural development, regulating the establishment of proper connectivity within the nervous system. Plays a role in the establishment of the anterior-posterior axis during gastrulation. Regulates the differentiation and cellular process formation of oligodendrocytes and myelination of small-diameter axons in the central nervous system (CNS). Promotes activation of focal adhesion kinase. May function as a cellular signal transducer. The chain is Teneurin-4 (TENM4) from Homo sapiens (Human).